The following is a 154-amino-acid chain: Large ribosomal subunit protein uL13 (154 aa).

Belongs to the universal ribosomal protein uL13 family. Part of the 50S ribosomal subunit.

Its function is as follows. This protein is one of the early assembly proteins of the 50S ribosomal subunit, although it is not seen to bind rRNA by itself. It is important during the early stages of 50S assembly. The chain is Large ribosomal subunit protein uL13 from Brucella melitensis biotype 2 (strain ATCC 23457).